The chain runs to 383 residues: Putative dehydratase subunit YjiM (383 aa).

It belongs to the FldB/FldC dehydratase alpha/beta subunit family.

The protein is Putative dehydratase subunit YjiM (yjiM) of Escherichia coli (strain K12).